The following is a 144-amino-acid chain: Small ribosomal subunit protein eS12y (144 aa).

N-acetylserine is present on serine 2.

It belongs to the eukaryotic ribosomal protein eS12 family.

The polypeptide is Small ribosomal subunit protein eS12y (RPS12C) (Arabidopsis thaliana (Mouse-ear cress)).